A 296-amino-acid polypeptide reads, in one-letter code: ATP phosphoribosyltransferase (296 aa).

The protein belongs to the ATP phosphoribosyltransferase family.

Its subcellular location is the cytoplasm. The enzyme catalyses 1-(5-phospho-beta-D-ribosyl)-ATP + diphosphate = 5-phospho-alpha-D-ribose 1-diphosphate + ATP. The protein operates within amino-acid biosynthesis; L-histidine biosynthesis; L-histidine from 5-phospho-alpha-D-ribose 1-diphosphate: step 1/9. In terms of biological role, catalyzes the condensation of ATP and 5-phosphoribose 1-diphosphate to form N'-(5'-phosphoribosyl)-ATP (PR-ATP). Has a crucial role in the pathway because the rate of histidine biosynthesis seems to be controlled primarily by regulation of the enzymatic activity. The sequence is that of ATP phosphoribosyltransferase (HIS1) from Yarrowia lipolytica (strain CLIB 122 / E 150) (Yeast).